We begin with the raw amino-acid sequence, 2263 residues long: Collagen alpha-6(VI) chain (2263 aa).

Positions 1 to 19 are cleaved as a signal peptide; it reads MMLLILFLVIICSHISVNQ. The nonhelical region stretch occupies residues 20 to 1391; sequence DSGPEYADVV…TCCCLFCKCI (1372 aa). VWFA domains are found at residues 27 to 206, 229 to 411, 436 to 606, 622 to 791, and 809 to 982; these read DVVF…IKDV, DVVF…RNQI, DIYL…RNQV, DIMF…EDDL, and DVVF…FSDV. Asparagine 198, asparagine 275, asparagine 288, asparagine 347, and asparagine 520 each carry an N-linked (GlcNAc...) asparagine glycan. Residues asparagine 930 and asparagine 988 are each glycosylated (N-linked (GlcNAc...) asparagine). VWFA domains lie at 1000 to 1171 and 1187 to 1371; these read DLVF…NKRI and DVVV…GSRL. An N-linked (GlcNAc...) asparagine glycan is attached at asparagine 1290. Residues 1392–1725 are triple-helical region; it reads GGDGTMGDPG…GRKGVKGAKG (334 aa). The tract at residues 1397-1723 is disordered; it reads MGDPGPPGKR…PPGRKGVKGA (327 aa). The span at 1498–1508 shows a compositional bias: basic and acidic residues; that stretch reads TPGDRGAKGLR. The Cell attachment site signature appears at 1508-1510; that stretch reads RGD. The segment covering 1547–1559 has biased composition (basic residues); it reads SRRKTAAHGRRGH. Over residues 1680 to 1689 the composition is skewed to gly residues; it reads GDPGGPGETG. The interval 1726–2263 is nonhelical region; that stretch reads LASFSTCELI…MIESAPKQHD (538 aa). VWFA domains lie at 1757–1937 and 1965–2166; these read ELVF…ERLQ and DAAF…INSI.

The protein belongs to the type VI collagen family. In terms of assembly, trimers composed of three different chains: alpha-1(VI), alpha-2(VI), and alpha-3(VI) or alpha-5(VI) or alpha-6(VI). Post-translationally, prolines at the third position of the tripeptide repeating unit (G-X-Y) are hydroxylated in some or all of the chains.

The protein resides in the secreted. It localises to the extracellular space. The protein localises to the extracellular matrix. In terms of biological role, collagen VI acts as a cell-binding protein. This Homo sapiens (Human) protein is Collagen alpha-6(VI) chain (COL6A6).